A 466-amino-acid chain; its full sequence is Glutamate--tRNA ligase 2 (466 aa).

The 'HIGH' region motif lies at 9–19 (PSPTGSLHLGG). Residues 236–240 (KLSKR) carry the 'KMSKS' region motif. Residue K239 participates in ATP binding.

Belongs to the class-I aminoacyl-tRNA synthetase family. Glutamate--tRNA ligase type 1 subfamily. In terms of assembly, monomer.

The protein resides in the cytoplasm. It catalyses the reaction tRNA(Glu) + L-glutamate + ATP = L-glutamyl-tRNA(Glu) + AMP + diphosphate. Catalyzes the attachment of glutamate to tRNA(Glu) in a two-step reaction: glutamate is first activated by ATP to form Glu-AMP and then transferred to the acceptor end of tRNA(Glu). In Anaplasma marginale (strain St. Maries), this protein is Glutamate--tRNA ligase 2.